Here is a 633-residue protein sequence, read N- to C-terminus: Chaperone protein HtpG (633 aa).

Residues Met-1–Arg-345 form an a; substrate-binding region. Positions Glu-346–Arg-562 are b. The c stretch occupies residues Leu-563–Gly-633.

This sequence belongs to the heat shock protein 90 family. In terms of assembly, homodimer.

It localises to the cytoplasm. Functionally, molecular chaperone. Has ATPase activity. The polypeptide is Chaperone protein HtpG (Halorhodospira halophila (strain DSM 244 / SL1) (Ectothiorhodospira halophila (strain DSM 244 / SL1))).